The chain runs to 448 residues: uncharacterized protein (448 aa).

Lysine 297 is subject to N6-(pyridoxal phosphate)lysine.

The protein belongs to the class-III pyridoxal-phosphate-dependent aminotransferase family. Pyridoxal 5'-phosphate is required as a cofactor.

This is an uncharacterized protein from Sinorhizobium fredii (strain NBRC 101917 / NGR234).